The primary structure comprises 239 residues: RNA-binding protein 38 (239 aa).

The RRM domain maps to 34 to 111 (TKIFVGGLPY…RKANVNLAYL (78 aa)).

This sequence belongs to the RBM38 family.

The protein resides in the cytoplasm. The protein localises to the cytosol. Its subcellular location is the nucleus. RNA-binding protein that specifically bind the 3'-UTR of CDKN1A transcripts, leading to maintain the stability of CDKN1A transcripts, thereby acting as a mediator of the p53/TP53 family to regulate CDKN1A. CDKN1A is a cyclin-dependent kinase inhibitor transcriptionally regulated by the p53/TP53 family to induce cell cycle arrest. Isoform 1, but not isoform 2, has the ability to induce cell cycle arrest in G1 and maintain the stability of CDKN1A transcripts induced by p53/TP53. Also acts as a mRNA splicing factor. Specifically regulates the expression of FGFR2-IIIb, an epithelial cell-specific isoform of FGFR2. Plays a role in myogenic differentiation. Its function is as follows. (Microbial infection) Essential factor for the splicing of the pre-mRNAs of human parvovirus B19 (B19V) and for the expression of B19V 11-kDa protein, which enhances viral replication. In Homo sapiens (Human), this protein is RNA-binding protein 38 (RBM38).